Here is a 107-residue protein sequence, read N- to C-terminus: Large ribosomal subunit protein P1 (107 aa).

The disordered stretch occupies residues 67 to 107 (GAAPAAAAPAAGGAPAAGAAPKKEEKKEPSEEEDMGFSLFD). Positions 69–86 (APAAAAPAAGGAPAAGAA) are enriched in low complexity.

Belongs to the eukaryotic ribosomal protein P1/P2 family. As to quaternary structure, P1 and P2 exist as dimers at the large ribosomal subunit.

Functionally, plays an important role in the elongation step of protein synthesis. In Chlamydomonas reinhardtii (Chlamydomonas smithii), this protein is Large ribosomal subunit protein P1.